The primary structure comprises 396 residues: Activity-regulated cytoskeleton-associated protein (396 aa).

The stretch at 54 to 78 (SKQVERELKGLHRSVGKLENNLDGY) forms a coiled coil. The segment at 89 to 100 (KSIKACLCRCQE) is interaction with SH3GL1 or SH3GL3. The interaction with DNM2 stretch occupies residues 195-214 (QSWVPGEDGQPSPGVDTQIF). A Phosphoserine modification is found at Ser260. Residues Lys268 and Lys269 each participate in a glycyl lysine isopeptide (Lys-Gly) (interchain with G-Cter in ubiquitin) cross-link. Phosphothreonine is present on Thr278. The interval 358–396 (GLEQAAEPSVTPLPTEDETEALTPALTSESVASDRTQPE) is disordered. A compositionally biased stretch (polar residues) spans 382–396 (ALTSESVASDRTQPE).

The protein belongs to the ARC/ARG3.1 family. As to quaternary structure, homooligomer; homooligomerizes into virion-like capsids. Interacts with SH3GL1/endophilin-2, SH3GL3/endophilin-3 and DNM2/DYN2. Interacts with CAMK2B (in the kinase inactive state); leading to target ARC to inactive synapses. Interacts with PSEN1. Interacts with GRIN2A and GRIN2B; inhibiting homooligomerization. Palmitoylation anchors the protein into the membrane by allowing direct insertion into the hydrophobic core of the lipid bilayer. In terms of processing, ubiquitinated by UBE3A, leading to its degradation by the proteasome, thereby promoting AMPA receptors (AMPARs) expression at synapses. Ubiquitinated by RNF216 at Lys-268 and Lys-269 limiting ARC protein levels induced by synaptic activity and thus regulating ARC-dependent forms of synaptic plasticity. Post-translationally, phosphorylation at Ser-260 by CaMK2 prevents homooligomerization into virion-like capsids by disrupting an interaction surface essential for high-order oligomerization. Phosphorylation by CaMK2 inhibits synaptic activity. As to expression, expressed exclusively in certain parts of the brain including cortex and molecular layer of the hippocampus. Typically expressed at high level in a minority of neurons. Basal expression higher in cortex than in hippocampus, highest in visual cortex.

Its subcellular location is the extracellular vesicle membrane. It is found in the postsynaptic cell membrane. It localises to the synapse. The protein resides in the postsynaptic density. The protein localises to the early endosome membrane. Its subcellular location is the cell projection. It is found in the dendrite. It localises to the cytoplasm. The protein resides in the cytoskeleton. The protein localises to the cell cortex. Its subcellular location is the dendritic spine. It is found in the cytoplasmic vesicle. It localises to the secretory vesicle. The protein resides in the acrosome. The protein localises to the clathrin-coated vesicle membrane. Functionally, master regulator of synaptic plasticity that self-assembles into virion-like capsids that encapsulate RNAs and mediate intercellular RNA transfer in the nervous system. ARC protein is released from neurons in extracellular vesicles that mediate the transfer of ARC mRNA into new target cells, where ARC mRNA can undergo activity-dependent translation. ARC capsids are endocytosed and are able to transfer ARC mRNA into the cytoplasm of neurons. Acts as a key regulator of synaptic plasticity: required for protein synthesis-dependent forms of long-term potentiation (LTP) and depression (LTD) and for the formation of long-term memory. Regulates synaptic plasticity by promoting endocytosis of AMPA receptors (AMPARs) in response to synaptic activity: this endocytic pathway maintains levels of surface AMPARs in response to chronic changes in neuronal activity through synaptic scaling, thereby contributing to neuronal homeostasis. Acts as a postsynaptic mediator of activity-dependent synapse elimination in the developing cerebellum by mediating elimination of surplus climbing fiber synapses. Accumulates at weaker synapses, probably to prevent their undesired enhancement. This suggests that ARC-containing virion-like capsids may be required to eliminate synaptic material. Required to transduce experience into long-lasting changes in visual cortex plasticity and for long-term memory. Involved in postsynaptic trafficking and processing of amyloid-beta A4 (APP) via interaction with PSEN1. In addition to its role in synapses, also involved in the regulation of the immune system: specifically expressed in skin-migratory dendritic cells and regulates fast dendritic cell migration, thereby regulating T-cell activation. This Rattus norvegicus (Rat) protein is Activity-regulated cytoskeleton-associated protein.